Consider the following 292-residue polypeptide: AKT-interacting protein (292 aa).

The tract at residues 1–63 is disordered; sequence MNPLWSMSAG…TSPAPAAQST (63 aa). Residues 14 to 23 are compositionally biased toward basic and acidic residues; that stretch reads KRAEGEEKTL. Residue S30 is modified to Phosphoserine. One can recognise a UBC core domain in the interval 74–222; sequence YLEYSLLAEF…VVDSVKVCTA (149 aa).

Belongs to the ubiquitin-conjugating enzyme family. FTS subfamily. Component of the FTS/Hook/FHIP complex (FHF complex), composed of AKTIP/FTS, FHIP1B, and one or more members of the Hook family of proteins HOOK1, HOOK2, and HOOK3. Interacts directly with HOOK1, HOOK2 and HOOK3. The FHF complex associates with the homotypic vesicular sorting complex (the HOPS complex). Also interacts with AKT1. May interact with FHIP1A. As to expression, ubiquitous. Highest expression in kidney, testis and brain and lowest in spleen and liver.

It localises to the cytoplasm. Its subcellular location is the cell membrane. Its function is as follows. Component of the FTS/Hook/FHIP complex (FHF complex). The FHF complex may function to promote vesicle trafficking and/or fusion via the homotypic vesicular protein sorting complex (the HOPS complex). Regulates apoptosis by enhancing phosphorylation and activation of AKT1. Increases release of TNFSF6 via the AKT1/GSK3B/NFATC1 signaling cascade. FHF complex promotes the distribution of AP-4 complex to the perinuclear area of the cell. The protein is AKT-interacting protein (Aktip) of Mus musculus (Mouse).